We begin with the raw amino-acid sequence, 361 residues long: S-adenosylmethionine decarboxylase proenzyme (361 aa).

Active-site residues include E13 and E16. S73 acts as the Schiff-base intermediate with substrate; via pyruvic acid in catalysis. A Pyruvic acid (Ser); by autocatalysis modification is found at S73. Catalysis depends on C87, which acts as the Proton donor; for catalytic activity. Residues S236 and H249 each act as proton acceptor; for processing activity in the active site.

This sequence belongs to the eukaryotic AdoMetDC family. It depends on pyruvate as a cofactor. Is synthesized initially as an inactive proenzyme. Formation of the active enzyme involves a self-maturation process in which the active site pyruvoyl group is generated from an internal serine residue via an autocatalytic post-translational modification. Two non-identical subunits are generated from the proenzyme in this reaction, and the pyruvate is formed at the N-terminus of the alpha chain, which is derived from the carboxyl end of the proenzyme. The post-translation cleavage follows an unusual pathway, termed non-hydrolytic serinolysis, in which the side chain hydroxyl group of the serine supplies its oxygen atom to form the C-terminus of the beta chain, while the remainder of the serine residue undergoes an oxidative deamination to produce ammonia and the pyruvoyl group blocking the N-terminus of the alpha chain.

The catalysed reaction is S-adenosyl-L-methionine + H(+) = S-adenosyl 3-(methylsulfanyl)propylamine + CO2. It participates in amine and polyamine biosynthesis; S-adenosylmethioninamine biosynthesis; S-adenosylmethioninamine from S-adenosyl-L-methionine: step 1/1. In Nicotiana tabacum (Common tobacco), this protein is S-adenosylmethionine decarboxylase proenzyme (SAMDC).